Here is a 463-residue protein sequence, read N- to C-terminus: Chaperone SurA (463 aa).

An N-terminal signal peptide occupies residues 1 to 25; sequence MTRYFSIVLSLLLAVSCVFLPVASA. PpiC domains follow at residues 175 to 277 and 291 to 390; these read GAQY…KLVE and ATEY…QRLG. Residues 439–463 form a disordered region; the sequence is ADDHHTPSAAVTPATGAVLPAATKH.

Its subcellular location is the periplasm. The enzyme catalyses [protein]-peptidylproline (omega=180) = [protein]-peptidylproline (omega=0). In terms of biological role, chaperone involved in the correct folding and assembly of outer membrane proteins. Recognizes specific patterns of aromatic residues and the orientation of their side chains, which are found more frequently in integral outer membrane proteins. May act in both early periplasmic and late outer membrane-associated steps of protein maturation. The protein is Chaperone SurA of Xylella fastidiosa (strain Temecula1 / ATCC 700964).